The sequence spans 167 residues: Lipoprotein signal peptidase (167 aa).

The next 4 membrane-spanning stretches (helical) occupy residues 8 to 28 (TFLT…VVLL), 46 to 66 (WGHF…FGLF), 68 to 88 (QYKI…ALFL), and 101 to 121 (IALT…LLHG). Active-site residues include D125 and D143. A helical transmembrane segment spans residues 139 to 159 (FNLADAFISIGTLLLIGHLYF).

The protein belongs to the peptidase A8 family.

It localises to the cell inner membrane. The catalysed reaction is Release of signal peptides from bacterial membrane prolipoproteins. Hydrolyzes -Xaa-Yaa-Zaa-|-(S,diacylglyceryl)Cys-, in which Xaa is hydrophobic (preferably Leu), and Yaa (Ala or Ser) and Zaa (Gly or Ala) have small, neutral side chains.. The protein operates within protein modification; lipoprotein biosynthesis (signal peptide cleavage). This protein specifically catalyzes the removal of signal peptides from prolipoproteins. The protein is Lipoprotein signal peptidase of Chlamydia trachomatis serovar L2b (strain UCH-1/proctitis).